Here is a 260-residue protein sequence, read N- to C-terminus: 6-carboxyhexanoate--CoA ligase (260 aa).

It belongs to the BioW family. As to quaternary structure, homodimer. Requires Mg(2+) as cofactor.

The catalysed reaction is heptanedioate + ATP + CoA = 6-carboxyhexanoyl-CoA + AMP + diphosphate. It participates in metabolic intermediate metabolism; pimeloyl-CoA biosynthesis; pimeloyl-CoA from pimelate: step 1/1. In terms of biological role, catalyzes the transformation of pimelate into pimeloyl-CoA with concomitant hydrolysis of ATP to AMP. In Fibrobacter succinogenes (strain ATCC 19169 / S85), this protein is 6-carboxyhexanoate--CoA ligase.